The primary structure comprises 119 residues: Ribonuclease P protein component (119 aa).

This sequence belongs to the RnpA family. Consists of a catalytic RNA component (M1 or rnpB) and a protein subunit.

It carries out the reaction Endonucleolytic cleavage of RNA, removing 5'-extranucleotides from tRNA precursor.. RNaseP catalyzes the removal of the 5'-leader sequence from pre-tRNA to produce the mature 5'-terminus. It can also cleave other RNA substrates such as 4.5S RNA. The protein component plays an auxiliary but essential role in vivo by binding to the 5'-leader sequence and broadening the substrate specificity of the ribozyme. This is Ribonuclease P protein component from Listeria innocua serovar 6a (strain ATCC BAA-680 / CLIP 11262).